The chain runs to 235 residues: Ion-translocating oxidoreductase complex subunit E (235 aa).

Transmembrane regions (helical) follow at residues 63–83 (LGLGLATMLVLTCTNTVISLF), 93–113 (IPIYVMIIATTVTAVQLLMNA), 117–137 (TLYQSLGIFIPLIVTNCIIIG), 152–172 (IWDGFSMGLGMALSLTILGAL), and 206–226 (SFLLFILPPGAFIGLGLLLAI).

This sequence belongs to the NqrDE/RnfAE family. The complex is composed of six subunits: RnfA, RnfB, RnfC, RnfD, RnfE and RnfG.

The protein resides in the cell inner membrane. Functionally, part of a membrane-bound complex that couples electron transfer with translocation of ions across the membrane. The polypeptide is Ion-translocating oxidoreductase complex subunit E (Haemophilus influenzae (strain 86-028NP)).